The chain runs to 323 residues: MQTIPLPIRPTAGRWRTADVVALYELPFPELLHRAQSVHREHFDATEIQLSSLLSIKTGGCPEDCGYCSQSARHDSGLAAEKLMPLDEVLAEARAAKNAGAQRFCMGAAWRSPKPHHLEAVAEMVREVKALGLETCVTLGMLQDGQAEQLKEAGLDYYNHNLDTSPEFYGNVVTTRGYQDRLDTLARVRNAGIHVCCGGIIGMGESRRDRASLIAQLANMEPYPESVPINHLVPIPGTPLAEAAPVDVFEFIRTIAVARITMPRAKVRLSAGRQSMSEAEQALCLLAGANSIFYGASLLTTGNPQVQADRALMSKLGMRPETV.

Residues 46–264 (TEIQLSSLLS…IAVARITMPR (219 aa)) form the Radical SAM core domain. [4Fe-4S] cluster is bound by residues cysteine 61, cysteine 65, and cysteine 68. Cysteine 105, cysteine 136, cysteine 196, and arginine 268 together coordinate [2Fe-2S] cluster.

It belongs to the radical SAM superfamily. Biotin synthase family. As to quaternary structure, homodimer. It depends on [4Fe-4S] cluster as a cofactor. [2Fe-2S] cluster is required as a cofactor.

It carries out the reaction (4R,5S)-dethiobiotin + (sulfur carrier)-SH + 2 reduced [2Fe-2S]-[ferredoxin] + 2 S-adenosyl-L-methionine = (sulfur carrier)-H + biotin + 2 5'-deoxyadenosine + 2 L-methionine + 2 oxidized [2Fe-2S]-[ferredoxin]. The protein operates within cofactor biosynthesis; biotin biosynthesis; biotin from 7,8-diaminononanoate: step 2/2. Functionally, catalyzes the conversion of dethiobiotin (DTB) to biotin by the insertion of a sulfur atom into dethiobiotin via a radical-based mechanism. In Bordetella avium (strain 197N), this protein is Biotin synthase.